Reading from the N-terminus, the 7968-residue chain is Obscurin (7968 aa).

Ig-like domains are found at residues 10–100 (PRFL…LQVD), 110–202 (PHFL…LVVD), 236–322 (PASP…QTYS), 331–414 (PAVP…RTVA), and 420–508 (GNLL…VSAP). A disulfide bridge links cysteine 31 with cysteine 82. The tract at residues 228–249 (EAMRAEGAPASPPSTGTRTCTV) is disordered. Over residues 240–249 (PSTGTRTCTV) the composition is skewed to polar residues. 2 cysteine pairs are disulfide-bonded: cysteine 259–cysteine 311 and cysteine 354–cysteine 404. Serine 395 carries the post-translational modification Phosphoserine. Residues 515 to 612 (PPVDPVVKAR…FPGTVHLAPK (98 aa)) enclose the Fibronectin type-III 1 domain. 12 consecutive Ig-like domains span residues 619 to 698 (LKAV…MEVR), 701 to 790 (PGLT…YQLS), 798 to 884 (LHKD…LRVS), 886 to 977 (PKVV…DVKE), 978 to 1066 (PKVV…FRLH), 1070 to 1161 (PKMM…HITE), 1162 to 1252 (PKGV…LHIT), 1254 to 1345 (PKAV…DVSE), 1346 to 1432 (PKAV…LSFS), 1438 to 1524 (PKVV…LSFH), 1530 to 1621 (PKAV…HVAE), and 1622 to 1719 (PKVV…PQIS). Intrachain disulfides connect cysteine 819–cysteine 870, cysteine 912–cysteine 962, cysteine 1004–cysteine 1054, cysteine 1096–cysteine 1146, cysteine 1188–cysteine 1238, cysteine 1280–cysteine 1330, cysteine 1372–cysteine 1422, cysteine 1464–cysteine 1514, cysteine 1556–cysteine 1606, cysteine 1648–cysteine 1698, cysteine 1723–cysteine 1791, and cysteine 1830–cysteine 1880. A Fibronectin type-III 2 domain is found at 1731 to 1808 (KEHEDIILTA…DFPVQVEEVA (78 aa)). Ig-like domains lie at 1809-1894 (AKFC…LTVS), 1896-1982 (PRVV…AALR), 1987-2071 (PVLF…AKLT), 2077-2162 (VRLV…LVVT), 2165-2249 (PVSF…ASVK), 2289-2380 (PVTL…QSIT), 2468-2559 (PVVL…REVT), 2564-2643 (LQDA…LEVR), 2646-2730 (PVVF…ARVR), 2736-2823 (VGIT…LIVR), 2826-2908 (PAAI…STAS), 2920-2999 (EELT…AQLL), 3003-3092 (RRVH…LRVT), 3095-3183 (PSVF…VHAR), 3184-3268 (PVRF…ATLT), 3273-3356 (PAQF…ASLT), 3359-3444 (PMPA…ATLT), 3449-3532 (PAKF…ATLT), 3537-3620 (PARF…AMLT), 3625-3708 (PIKF…AMLT), 3713-3796 (PSKF…ATLT), 3801-3884 (PARF…ATLT), 3890-3973 (PVFR…ATLT), 3978-4062 (PVRF…ASLS), 4068-4160 (PKFK…PEVT), 4171-4239 (TADE…NHAS), 4248-4337 (PEVT…LKVT), 4340-4427 (NTVV…FLTV), and 4430-4518 (WRLE…ARLT). Cystine bridges form between cysteine 2187/cysteine 2237, cysteine 2311/cysteine 2361, and cysteine 2490/cysteine 2540. Residues cysteine 2668 and cysteine 2718 are joined by a disulfide bond. 2 disulfide bridges follow: cysteine 2848–cysteine 2898 and cysteine 2937–cysteine 2987. Serine 2889 carries the phosphoserine modification. 12 disulfide bridges follow: cysteine 3117-cysteine 3167, cysteine 3206-cysteine 3256, cysteine 3295-cysteine 3344, cysteine 3383-cysteine 3432, cysteine 3471-cysteine 3520, cysteine 3559-cysteine 3608, cysteine 3647-cysteine 3696, cysteine 3735-cysteine 3784, cysteine 3823-cysteine 3872, cysteine 3911-cysteine 3961, cysteine 4000-cysteine 4050, and cysteine 4089-cysteine 4141. The residue at position 4015 (serine 4015) is a Phosphoserine. Cysteine 4453 and cysteine 4508 are joined by a disulfide. One can recognise a Fibronectin type-III 3 domain in the interval 4525 to 4619 (PPEDAEVVAR…LPQTVRLAEP (95 aa)). In terms of domain architecture, Ig-like 47 spans 4624–4714 (PPQPSAPESR…AAATFQVALS (91 aa)). The tract at residues 4749–4785 (MSREPTLDSISELPEEDGRSQRLPQEAEEVAPDLSEG) is disordered. Phosphoserine is present on serine 4750. Threonine 4754 is subject to Phosphothreonine. At serine 4757 the chain carries Phosphoserine. Threonine 4788 carries the post-translational modification Phosphothreonine. Phosphoserine is present on serine 4805. A disordered region spans residues 4820–4860 (LKKAGRPGTSPLASKVGAPAAPSVKPQQQQEPLAAVRPPLG). Residues 4872–4901 (MDKAAVKIQAAFKGYKVRKEMKQQEGPMFS) enclose the IQ domain. 2 Ig-like domains span residues 4898 to 4989 (PMFS…VVVS) and 5126 to 5215 (PVFL…AELR). 2 disulfide bridges follow: cysteine 4919-cysteine 4971 and cysteine 5147-cysteine 5199. Polar residues predominate over residues 5238 to 5256 (AQGYLSSREQEGTESTTDE). A disordered region spans residues 5238 to 5257 (AQGYLSSREQEGTESTTDEG). Ig-like domains follow at residues 5260-5349 (PQVV…ARLL) and 5371-5467 (PRML…LHVS). A disordered region spans residues 5554 to 5596 (AKLQVPGGDSDEDSKTPSASPRHGRSRPSSSIQESSSESEDGD). Residue serine 5563 is modified to Phosphoserine. Threonine 5569 bears the Phosphothreonine mark. Over residues 5570–5589 (PSASPRHGRSRPSSSIQESS) the composition is skewed to low complexity. Residues serine 5571 and serine 5573 each carry the phosphoserine modification. One can recognise an SH3 domain in the interval 5600 to 5667 (EIFDIYVVTA…SPAYLDRRLK (68 aa)). The 185-residue stretch at 5693-5877 (RLSSVIQELL…SALPQRAENK (185 aa)) folds into the DH domain. A PH domain is found at 5895-6004 (EPIRQGHFIV…WVKEICGIQQ (110 aa)). Arginine 5975 is an a 1,2-diacyl-sn-glycero-3-phospho-(1D-myo-inositol-4,5-bisphosphate) binding site. Arginine 5980 is an a 1,2-diacyl-sn-glycero-3-phospho-(1D-myo-inositol-3,4-bisphosphate) binding site. 2 Ig-like domains span residues 6014–6097 (PDFE…GNCS) and 6108–6200 (PRFV…LRIQ). 2 disulfide bridges follow: cysteine 6035/cysteine 6087 and cysteine 6129/cysteine 6182. Positions 6237–6296 (RLLGPKAPGPSTGDLTGPGPCPRGAPALQETGSQPPVTGTSEAPAVPPRVPQPLLHEGPE) are disordered. Residues 6266–6277 (ETGSQPPVTGTS) are compositionally biased toward polar residues. The region spanning 6357 to 6445 (PSMQVTIEDV…GQVLCKAELL (89 aa)) is the Ig-like 54 domain. Residues 6468–6721 (YEVKEEIGRG…AAQCLSHPWF (254 aa)) enclose the Protein kinase 1 domain. ATP-binding positions include 6474–6482 (IGRGVFGFV) and lysine 6497. Aspartate 6587 acts as the Proton acceptor in catalysis. Disordered regions lie at residues 6777-6863 (GVAR…AQGC), 6952-7176 (SGTH…TMRK), and 7217-7272 (VSQS…TPWE). Position 6831 is a phosphoserine (serine 6831). Pro residues predominate over residues 7052-7061 (AVAPCPPGSF). The span at 7115–7139 (SSPGSASQASSSQVSSLRVGSSQVG) shows a compositional bias: low complexity. The segment covering 7160–7172 (DSTPTLQRPQEQA) has biased composition (polar residues). A compositionally biased stretch (basic and acidic residues) spans 7227–7242 (EARAESQSEEQQEARA). Serine 7244 carries the post-translational modification Phosphoserine. One can recognise an Ig-like 55 domain in the interval 7463-7552 (PTFLRELSDE…GTVTTTGVLR (90 aa)). Cysteine 7484 and cysteine 7536 are disulfide-bonded. In terms of domain architecture, Fibronectin type-III 4 spans 7557–7649 (PSSSPCPDIG…PSEQVLLGGP (93 aa)). Positions 7672–7924 (FAFQTQIQRG…ASSCLQCPWL (253 aa)) constitute a Protein kinase 2 domain. ATP contacts are provided by residues 7678–7686 (IQRGRFSVV) and lysine 7701. The Proton acceptor role is filled by aspartate 7791.

This sequence belongs to the protein kinase superfamily. CAMK Ser/Thr protein kinase family. Interacts (via protein kinase domain 2) with CDH2 and (via protein kinase domain 1) with ATP1B1. Isoform 3 interacts with TTN/titin and calmodulin. Isoform 3 interacts with ANK1 isoform Mu17/ank1.5. Requires Mg(2+) as cofactor. Autophosphorylated by protein kinase domains 1 and 2.

The protein localises to the cytoplasm. It localises to the myofibril. It is found in the sarcomere. Its subcellular location is the m line. The protein resides in the z line. The protein localises to the cell membrane. It localises to the sarcolemma. It is found in the nucleus. It catalyses the reaction L-seryl-[protein] + ATP = O-phospho-L-seryl-[protein] + ADP + H(+). The catalysed reaction is L-threonyl-[protein] + ATP = O-phospho-L-threonyl-[protein] + ADP + H(+). Functionally, structural component of striated muscles which plays a role in myofibrillogenesis. Probably involved in the assembly of myosin into sarcomeric A bands in striated muscle. Has serine/threonine protein kinase activity and phosphorylates N-cadherin CDH2 and sodium/potassium-transporting ATPase subunit ATP1B1. Binds (via the PH domain) strongly to phosphatidylinositol 3,4-bisphosphate (PtdIns(3,4)P2) and phosphatidylinositol 4,5-bisphosphate (PtdIns(4,5)P2), and to a lesser extent to phosphatidylinositol 3-phosphate (PtdIns(3)P), phosphatidylinositol 4-phosphate (PtdIns(4)P), phosphatidylinositol 5-phosphate (PtdIns(5)P) and phosphatidylinositol 3,4,5-trisphosphate (PtdIns(3,4,5)P3). The chain is Obscurin (OBSCN) from Homo sapiens (Human).